A 119-amino-acid polypeptide reads, in one-letter code: MEGDVDEDDGTFTNISLADDSADGEPTVLRFRSEEQYSTMNCEIDGDMENQVEQEEKTRLINQVLELQHTLEDLSARVDAVKEENLKLKSENQVLGQYIENLMSASSVFQTTDTKSKRK.

Residues 1–10 (MEGDVDEDDG) are compositionally biased toward acidic residues. The interval 1–26 (MEGDVDEDDGTFTNISLADDSADGEP) is disordered. The stretch at 48–95 (MENQVEQEEKTRLINQVLELQHTLEDLSARVDAVKEENLKLKSENQVL) forms a coiled coil.

The protein belongs to the SCOC family.

The protein localises to the golgi apparatus membrane. It localises to the golgi apparatus. It is found in the trans-Golgi network. The protein resides in the cytoplasm. Its subcellular location is the cytosol. In terms of biological role, positive regulator of amino acid starvation-induced autophagy. In Danio rerio (Zebrafish), this protein is Short coiled-coil protein A (scoca).